A 75-amino-acid chain; its full sequence is UPF0346 protein LJ_1103 (75 aa).

Belongs to the UPF0346 family.

In Lactobacillus johnsonii (strain CNCM I-12250 / La1 / NCC 533), this protein is UPF0346 protein LJ_1103.